The sequence spans 70 residues: Large ribosomal subunit protein bL31 (70 aa).

Positions 16, 18, 37, and 40 each coordinate Zn(2+).

The protein belongs to the bacterial ribosomal protein bL31 family. Type A subfamily. In terms of assembly, part of the 50S ribosomal subunit. Zn(2+) is required as a cofactor.

Its function is as follows. Binds the 23S rRNA. The polypeptide is Large ribosomal subunit protein bL31 (Salmonella agona (strain SL483)).